The sequence spans 116 residues: Large ribosomal subunit protein bL19 (116 aa).

The protein belongs to the bacterial ribosomal protein bL19 family.

This protein is located at the 30S-50S ribosomal subunit interface and may play a role in the structure and function of the aminoacyl-tRNA binding site. The sequence is that of Large ribosomal subunit protein bL19 from Staphylococcus aureus (strain Mu3 / ATCC 700698).